A 284-amino-acid chain; its full sequence is Bifunctional protein FolD 1 (284 aa).

NADP(+)-binding positions include 166–168 and isoleucine 232; that span reads GAS.

It belongs to the tetrahydrofolate dehydrogenase/cyclohydrolase family. Homodimer.

The enzyme catalyses (6R)-5,10-methylene-5,6,7,8-tetrahydrofolate + NADP(+) = (6R)-5,10-methenyltetrahydrofolate + NADPH. It catalyses the reaction (6R)-5,10-methenyltetrahydrofolate + H2O = (6R)-10-formyltetrahydrofolate + H(+). It participates in one-carbon metabolism; tetrahydrofolate interconversion. Its function is as follows. Catalyzes the oxidation of 5,10-methylenetetrahydrofolate to 5,10-methenyltetrahydrofolate and then the hydrolysis of 5,10-methenyltetrahydrofolate to 10-formyltetrahydrofolate. The chain is Bifunctional protein FolD 1 from Ectopseudomonas mendocina (strain ymp) (Pseudomonas mendocina).